A 158-amino-acid polypeptide reads, in one-letter code: Endoribonuclease YbeY (158 aa).

H119, H123, and D129 together coordinate Zn(2+).

The protein belongs to the endoribonuclease YbeY family. It depends on Zn(2+) as a cofactor.

The protein resides in the cytoplasm. Its function is as follows. Single strand-specific metallo-endoribonuclease involved in late-stage 70S ribosome quality control and in maturation of the 3' terminus of the 16S rRNA. The polypeptide is Endoribonuclease YbeY (Chlamydia felis (strain Fe/C-56) (Chlamydophila felis)).